We begin with the raw amino-acid sequence, 308 residues long: Ornithine carbamoyltransferase (308 aa).

Residues 51-54 (STRT), Gln78, Arg102, and 129-132 (HPTQ) each bind carbamoyl phosphate. L-ornithine-binding positions include Asn160, Asp224, and 228–229 (SM). Residues 264–265 (CL) and Arg292 each bind carbamoyl phosphate.

Belongs to the aspartate/ornithine carbamoyltransferase superfamily. OTCase family.

The protein resides in the cytoplasm. It catalyses the reaction carbamoyl phosphate + L-ornithine = L-citrulline + phosphate + H(+). The protein operates within amino-acid biosynthesis; L-arginine biosynthesis; L-arginine from L-ornithine and carbamoyl phosphate: step 1/3. Functionally, reversibly catalyzes the transfer of the carbamoyl group from carbamoyl phosphate (CP) to the N(epsilon) atom of ornithine (ORN) to produce L-citrulline. This is Ornithine carbamoyltransferase from Caldicellulosiruptor saccharolyticus (strain ATCC 43494 / DSM 8903 / Tp8T 6331).